A 355-amino-acid chain; its full sequence is NADH-quinone oxidoreductase subunit H (355 aa).

Helical transmembrane passes span 25–45 (LVRILVVAVVILLCVAYLILW), 91–111 (WLYLVAPVMTVVPAFAVWAVI), 126–146 (LLYAMAISSIGVYAVILAGWA), 170–190 (MGFALVLVLMTAGSLNLSEIV), 205–225 (FLSWNWLPLLPAFVVYFVSGI), 253–273 (MAFALFFLAEYINMIVISALA), 290–310 (FIPGIFWLVLKVFALLSVFIW), and 330–350 (VFLPVTVIWVVVVGFWMMSPL).

This sequence belongs to the complex I subunit 1 family. In terms of assembly, NDH-1 is composed of 14 different subunits. Subunits NuoA, H, J, K, L, M, N constitute the membrane sector of the complex.

The protein localises to the cell inner membrane. The catalysed reaction is a quinone + NADH + 5 H(+)(in) = a quinol + NAD(+) + 4 H(+)(out). In terms of biological role, NDH-1 shuttles electrons from NADH, via FMN and iron-sulfur (Fe-S) centers, to quinones in the respiratory chain. The immediate electron acceptor for the enzyme in this species is believed to be ubiquinone. Couples the redox reaction to proton translocation (for every two electrons transferred, four hydrogen ions are translocated across the cytoplasmic membrane), and thus conserves the redox energy in a proton gradient. This subunit may bind ubiquinone. The protein is NADH-quinone oxidoreductase subunit H of Burkholderia vietnamiensis (strain G4 / LMG 22486) (Burkholderia cepacia (strain R1808)).